The following is a 214-amino-acid chain: Killer cell lectin-like receptor subfamily B member 1 (214 aa).

Topologically, residues 1–42 (MDAPVLYAELNLAETRGLRCTSAPSLPQDACQGPGWHRVALK) are cytoplasmic. A helical; Signal-anchor for type II membrane protein membrane pass occupies residues 43–63 (LGCAGLIFLLMVLSVLVGFLV). Over 64-214 (QKPLIEKCSV…WICQKTLKHV (151 aa)) the chain is Extracellular. Residues 98–208 (HCDKCLFTSQ…CSSDNHWICQ (111 aa)) form the C-type lectin domain. 2 disulfide bridges follow: Cys119–Cys207 and Cys186–Cys199.

The protein localises to the membrane. The protein is Killer cell lectin-like receptor subfamily B member 1 (Klrb1) of Mus musculus (Mouse).